The following is a 1134-amino-acid chain: Ubinuclein-1 (1134 aa).

Disordered stretches follow at residues 1–38 and 78–98; these read MSEPHRVQFTSLPGSLNPAFLKKSRKEEAGAGEQHQDC and LQPGDKKKDLSDPFNDEEKER. Positions 1-166 are sufficient for interaction with HIRA; it reads MSEPHRVQFT…YGGFYINSGT (166 aa). 2 stretches are compositionally biased toward basic and acidic residues: residues 25–38 and 81–98; these read RKEEAGAGEQHQDC and GDKKKDLSDPFNDEEKER. Threonine 166 bears the Phosphothreonine mark. Positions 171-220 are disordered; it reads QASESEDDFIKEKKKKSPKKRKLKEGGEKIKKKKKDDTYDKEKKSKKSKF. A phosphoserine mark is found at serine 173 and serine 175. Residues 182–193 show a composition bias toward basic residues; the sequence is EKKKKSPKKRKL. Residues 194 to 213 show a composition bias toward basic and acidic residues; the sequence is KEGGEKIKKKKKDDTYDKEK. Position 222 is an N6-acetyllysine (lysine 222). Residues 253–268 are compositionally biased toward basic and acidic residues; that stretch reads QKEKEAQKKREEEHKP. Disordered regions lie at residues 253-282, 321-358, 480-504, and 594-660; these read QKEKEAQKKREEEHKPVAVPSAEAQGLREL, SESPEGSPFRDMDDGSDSLGVGLDQEFRQPSSLPEGLP, EEEKDKEQRDRICSDEEEDEEKGGR, and PSKI…LEDS. A phosphoserine mark is found at serine 323, serine 336, serine 338, and serine 493. A coiled-coil region spans residues 479-542; the sequence is LEEEKDKEQR…SQDLERNNKA (64 aa). Composition is skewed to basic and acidic residues over residues 480-493 and 598-610; these read EEEKDKEQRDRICS and KVKESSTKPDKKV. Serine 660 and serine 677 each carry phosphoserine. Disordered regions lie at residues 712–836 and 852–986; these read TEEK…SPTQ and QGFH…GVAK. Low complexity-rich tracts occupy residues 792 to 804 and 856 to 891; these read GPQVAVPVPGPQV and PSAPATSGGLSASSSSSHKTPASSSSALSHPAKPHS. Positions 892-905 are enriched in polar residues; it reads VSSAGSSYKNNPFA. Positions 906–932 are enriched in low complexity; it reads SSISKHGVSSGSSSSGGTPVQSSVSGS. Positions 941-950 are enriched in polar residues; sequence SVGQATSRPV. Over residues 973–982 the composition is skewed to gly residues; it reads PNGDSSGGTQ. Serine 1025 carries the post-translational modification Phosphoserine. The segment covering 1093-1108 has biased composition (low complexity); the sequence is GLHSSPPHAAPLPHAA. Residues 1093–1134 are disordered; it reads GLHSSPPHAAPLPHAAVPTHIPQSLPGASQLHGKGPAVPRKL.

Belongs to the ubinuclein family. As to quaternary structure, component of a complex that includes at least ASF1A, CABIN1, HIRA, histone H3.3 and UBN1. Interacts with HIRA (via WD repeat domain); the interaction is direct. Interacts with ASF1A, CEBPA, TJP1, TJP2 and TJP3. (Microbial infection) Interacts with Epstein-Barr virus BZLF1. In terms of tissue distribution, ubiquitous. Also expressed in numerous tumors and cancer cell lines.

The protein resides in the nucleus. It localises to the nucleoplasm. It is found in the PML body. Its subcellular location is the cell junction. The protein localises to the tight junction. Its function is as follows. Acts as a novel regulator of senescence. Involved in the formation of senescence-associated heterochromatin foci (SAHF), which represses expression of proliferation-promoting genes. Binds to proliferation-promoting genes. May be required for replication-independent chromatin assembly. This Homo sapiens (Human) protein is Ubinuclein-1 (UBN1).